A 201-amino-acid polypeptide reads, in one-letter code: Adenylyl-sulfate kinase (201 aa).

Position 35–42 (35–42 (GLSGSGKS)) interacts with ATP. S109 serves as the catalytic Phosphoserine intermediate.

Belongs to the APS kinase family.

The enzyme catalyses adenosine 5'-phosphosulfate + ATP = 3'-phosphoadenylyl sulfate + ADP + H(+). It participates in sulfur metabolism; hydrogen sulfide biosynthesis; sulfite from sulfate: step 2/3. Functionally, catalyzes the synthesis of activated sulfate. The protein is Adenylyl-sulfate kinase of Citrobacter koseri (strain ATCC BAA-895 / CDC 4225-83 / SGSC4696).